The sequence spans 995 residues: DExH-box ATP-dependent RNA helicase DExH1 (995 aa).

2 disordered regions span residues 1 to 42 (MPPH…EQRW) and 156 to 192 (KTTQ…ASKL). Gly residues predominate over residues 25–37 (RGGGGRGGGGGGR). Residues 161 to 170 (SGSSGASASA) are compositionally biased toward low complexity. Positions 171 to 181 (FNDQQDRTSTL) are enriched in polar residues. Positions 238 to 405 (LNSVSQNQVL…FGNSPTMHIP (168 aa)) constitute a Helicase ATP-binding domain. 251 to 258 (GETGCGKT) is an ATP binding site. The DEIH box motif lies at 352-355 (DEIH). Positions 429–450 (SSDSGNYQGSSRGRRRESESKK) are disordered. Residues 484-663 (QIDVDLVEAT…ELCLHIKSLQ (180 aa)) enclose the Helicase C-terminal domain.

Belongs to the DExH box helicase family.

It carries out the reaction ATP + H2O = ADP + phosphate + H(+). The protein is DExH-box ATP-dependent RNA helicase DExH1 of Arabidopsis thaliana (Mouse-ear cress).